Reading from the N-terminus, the 385-residue chain is Methylthioribose-1-phosphate isomerase (385 aa).

Residue Asp256 is the Proton donor of the active site.

This sequence belongs to the eIF-2B alpha/beta/delta subunits family. MtnA subfamily.

It is found in the cytoplasm. It localises to the nucleus. The catalysed reaction is 5-(methylsulfanyl)-alpha-D-ribose 1-phosphate = 5-(methylsulfanyl)-D-ribulose 1-phosphate. It participates in amino-acid biosynthesis; L-methionine biosynthesis via salvage pathway; L-methionine from S-methyl-5-thio-alpha-D-ribose 1-phosphate: step 1/6. Its function is as follows. Catalyzes the interconversion of methylthioribose-1-phosphate (MTR-1-P) into methylthioribulose-1-phosphate (MTRu-1-P). In Arthroderma otae (strain ATCC MYA-4605 / CBS 113480) (Microsporum canis), this protein is Methylthioribose-1-phosphate isomerase.